Reading from the N-terminus, the 371-residue chain is Alanine racemase (371 aa).

The Proton acceptor; specific for D-alanine role is filled by K35. K35 is modified (N6-(pyridoxal phosphate)lysine). R130 serves as a coordination point for substrate. The Proton acceptor; specific for L-alanine role is filled by Y256. Position 304 (M304) interacts with substrate.

Belongs to the alanine racemase family. It depends on pyridoxal 5'-phosphate as a cofactor.

The enzyme catalyses L-alanine = D-alanine. Its pathway is amino-acid biosynthesis; D-alanine biosynthesis; D-alanine from L-alanine: step 1/1. Its function is as follows. Catalyzes the interconversion of L-alanine and D-alanine. May also act on other amino acids. The chain is Alanine racemase (alr) from Verminephrobacter eiseniae (strain EF01-2).